Here is a 405-residue protein sequence, read N- to C-terminus: S-adenosylmethionine synthase (405 aa).

An ATP-binding site is contributed by 139–144 (GKGSAD).

Belongs to the AdoMet synthase 2 family. The cofactor is Mg(2+).

The enzyme catalyses L-methionine + ATP + H2O = S-adenosyl-L-methionine + phosphate + diphosphate. It participates in amino-acid biosynthesis; S-adenosyl-L-methionine biosynthesis; S-adenosyl-L-methionine from L-methionine: step 1/1. In terms of biological role, catalyzes the formation of S-adenosylmethionine from methionine and ATP. In Sulfurisphaera tokodaii (strain DSM 16993 / JCM 10545 / NBRC 100140 / 7) (Sulfolobus tokodaii), this protein is S-adenosylmethionine synthase.